Here is a 207-residue protein sequence, read N- to C-terminus: Ion-translocating oxidoreductase complex subunit G (207 aa).

Residues 11–31 (GILLGFIALLCTIISAGIFFL) traverse the membrane as a helical segment. Position 175 is an FMN phosphoryl threonine (T175).

This sequence belongs to the RnfG family. In terms of assembly, the complex is composed of six subunits: RnfA, RnfB, RnfC, RnfD, RnfE and RnfG. It depends on FMN as a cofactor.

The protein resides in the cell inner membrane. Its function is as follows. Part of a membrane-bound complex that couples electron transfer with translocation of ions across the membrane. The polypeptide is Ion-translocating oxidoreductase complex subunit G (Haemophilus influenzae (strain ATCC 51907 / DSM 11121 / KW20 / Rd)).